The sequence spans 130 residues: uncharacterized protein (130 aa).

The next 3 membrane-spanning stretches (helical) occupy residues 34 to 54 (AILI…FAFF), 73 to 93 (LLLT…GWLA), and 107 to 127 (FGTG…IVWI).

Its subcellular location is the cell membrane. This is an uncharacterized protein from Mycoplasma pneumoniae (strain ATCC 29342 / M129 / Subtype 1) (Mycoplasmoides pneumoniae).